A 277-amino-acid polypeptide reads, in one-letter code: Putative acetylornithine deacetylase (277 aa).

The enzyme catalyses N(2)-acetyl-L-ornithine + H2O = L-ornithine + acetate. It participates in amino-acid biosynthesis; L-arginine biosynthesis; L-ornithine from N(2)-acetyl-L-ornithine (linear): step 1/1. The protein is Putative acetylornithine deacetylase (argE) of Leptospira biflexa.